Reading from the N-terminus, the 707-residue chain is MSLWQPLVLVLLVLGCCFAAPRQRQSTLVLFPGDLRTNLTDRQLAEEYLYRYGYTRVAEMRGESKSLGPALLLLQKQLSLPETGELDSATLKAMRTPRCGVPDLGRFQTFEGDLKWHHHNITYWIQNYSEDLPRAVIDDAFARAFALWSAVTPLTFTRVYSRDADIVIQFGVAEHGDGYPFDGKDGLLAHAFPPGPGIQGDAHFDDDELWSLGKGVVVPTRFGNADGAACHFPFIFEGRSYSACTTDGRSDGLPWCSTTANYDTDDRFGFCPSERLYTQDGNADGKPCQFPFIFQGQSYSACTTDGRSDGYRWCATTANYDRDKLFGFCPTRADSTVMGGNSAGELCVFPFTFLGKEYSTCTSEGRGDGRLWCATTSNFDSDKKWGFCPDQGYSLFLVAAHEFGHALGLDHSSVPEALMYPMYRFTEGPPLHKDDVNGIRHLYGPRPEPEPRPPTTTTPQPTAPPTVCPTGPPTVHPSERPTAGPTGPPSAGPTGPPTAGPSTATTVPLSPVDDACNVNIFDAIAEIGNQLYLFKDGKYWRFSEGRGSRPQGPFLIADKWPALPRKLDSVFEERLSKKLFFFSGRQVWVYTGASVLGPRRLDKLGLGADVAQVTGALRSGRGKMLLFSGRRLWRFDVKAQMVDPRSASEVDRMFPGVPLDTHDVFQYREKAYFCQDRFYWRVSSRSELNQVDQVGYVTYDILQCPED.

A signal peptide spans 1 to 19; that stretch reads MSLWQPLVLVLLVLGCCFA. Residues 20–93 constitute a propeptide, activation peptide; the sequence is APRQRQSTLV…GELDSATLKA (74 aa). Asparagine 38 is a glycosylation site (N-linked (GlcNAc...) asparagine). Residues 97-104 carry the Cysteine switch motif; sequence PRCGVPDL. Cysteine 99 is a binding site for Zn(2+). 2 N-linked (GlcNAc...) asparagine glycosylation sites follow: asparagine 120 and asparagine 127. The Ca(2+) site is built by aspartate 131 and aspartate 165. Zn(2+) is bound by residues histidine 175 and aspartate 177. Aspartate 182, glycine 183, aspartate 185, and leucine 187 together coordinate Ca(2+). Histidine 190 lines the Zn(2+) pocket. 3 residues coordinate Ca(2+): glycine 197, glutamine 199, and aspartate 201. Histidine 203 contacts Zn(2+). Ca(2+)-binding residues include aspartate 205, aspartate 206, and glutamate 208. 3 consecutive Fibronectin type-II domains span residues 225 to 273, 283 to 331, and 342 to 390; these read ADGA…FCPS, ADGK…FCPT, and SAGE…FCPD. Disulfide bonds link cysteine 230–cysteine 256, cysteine 244–cysteine 271, cysteine 288–cysteine 314, cysteine 302–cysteine 329, cysteine 347–cysteine 373, and cysteine 361–cysteine 388. Histidine 401 contributes to the Zn(2+) binding site. Residue glutamate 402 is part of the active site. Zn(2+)-binding residues include histidine 405 and histidine 411. Residues 431–508 form a disordered region; that stretch reads LHKDDVNGIR…AGPSTATTVP (78 aa). 2 stretches are compositionally biased toward pro residues: residues 452–475 and 486–499; these read RPPTTTTPQPTAPPTVCPTGPPTV and TGPPSAGPTGPPTA. Cysteine 516 and cysteine 704 are oxidised to a cystine. Hemopexin repeat units lie at residues 518–563, 564–608, 610–657, and 658–704; these read VNIF…WPAL, PRKL…GLGA, VAQV…FPGV, and PLDT…ILQC.

This sequence belongs to the peptidase M10A family. As to quaternary structure, exists as monomer or homodimer; disulfide-linked. Also exists as heterodimer with LCN2. Macrophages and transformed cell lines produce only the monomeric form. Interacts with ECM1. In terms of assembly, (Microbial infection) Interacts with Staphylococcus aureus protein SSL5; this interaction inhibits MMP9 activity. It depends on Zn(2+) as a cofactor. Ca(2+) is required as a cofactor. In terms of processing, processing of the precursor yields different active forms of 64, 67 and 82 kDa. Sequentially processing by MMP3 yields the 82 kDa matrix metalloproteinase-9. Post-translationally, N- and O-glycosylated. In terms of tissue distribution, detected in neutrophils (at protein level). Produced by normal alveolar macrophages and granulocytes.

It localises to the secreted. The protein localises to the extracellular space. It is found in the extracellular matrix. The catalysed reaction is Cleavage of gelatin types I and V and collagen types IV and V.. Its activity is regulated as follows. Inhibited by histatin-3 1/24 (histatin-5). Inhibited by ECM1. Functionally, matrix metalloproteinase that plays an essential role in local proteolysis of the extracellular matrix and in leukocyte migration. Could play a role in bone osteoclastic resorption. Cleaves KiSS1 at a Gly-|-Leu bond. Cleaves NINJ1 to generate the Secreted ninjurin-1 form. Cleaves type IV and type V collagen into large C-terminal three quarter fragments and shorter N-terminal one quarter fragments. Degrades fibronectin but not laminin or Pz-peptide. The chain is Matrix metalloproteinase-9 (MMP9) from Homo sapiens (Human).